We begin with the raw amino-acid sequence, 158 residues long: SsrA-binding protein (158 aa).

Positions 131–158 (KQLHDKRQTEKERDWNKQKQRILQTNQR) are disordered. The segment covering 132–147 (QLHDKRQTEKERDWNK) has biased composition (basic and acidic residues).

This sequence belongs to the SmpB family.

The protein localises to the cytoplasm. Functionally, required for rescue of stalled ribosomes mediated by trans-translation. Binds to transfer-messenger RNA (tmRNA), required for stable association of tmRNA with ribosomes. tmRNA and SmpB together mimic tRNA shape, replacing the anticodon stem-loop with SmpB. tmRNA is encoded by the ssrA gene; the 2 termini fold to resemble tRNA(Ala) and it encodes a 'tag peptide', a short internal open reading frame. During trans-translation Ala-aminoacylated tmRNA acts like a tRNA, entering the A-site of stalled ribosomes, displacing the stalled mRNA. The ribosome then switches to translate the ORF on the tmRNA; the nascent peptide is terminated with the 'tag peptide' encoded by the tmRNA and targeted for degradation. The ribosome is freed to recommence translation, which seems to be the essential function of trans-translation. This chain is SsrA-binding protein, found in Teredinibacter turnerae (strain ATCC 39867 / T7901).